Consider the following 130-residue polypeptide: MADTQYYGTGRRKSSTARVFLRAGSGNIVVNKRPLDEFFGRETARMIVRQPLELVEMTEKFDLYVTVAGGGISGQAGAIRHGITRALMEFDETLRPSLRKAGFVTRDARKVERKKVGLHKARKRPQFSKR.

The protein belongs to the universal ribosomal protein uS9 family.

The protein is Small ribosomal subunit protein uS9 of Pseudoalteromonas atlantica (strain T6c / ATCC BAA-1087).